The chain runs to 243 residues: Small ribosomal subunit protein uS3 (243 aa).

Residues 39–110 (IRTFIQKKYS…QVRINVVEVE (72 aa)) form the KH type-2 domain. The disordered stretch occupies residues 221-243 (GAIPRRKGSRKPQQFEDRSNENS). The segment covering 233–243 (QQFEDRSNENS) has biased composition (basic and acidic residues).

It belongs to the universal ribosomal protein uS3 family. In terms of assembly, part of the 30S ribosomal subunit. Forms a tight complex with proteins S10 and S14.

In terms of biological role, binds the lower part of the 30S subunit head. Binds mRNA in the 70S ribosome, positioning it for translation. The polypeptide is Small ribosomal subunit protein uS3 (Prochlorococcus marinus subsp. pastoris (strain CCMP1986 / NIES-2087 / MED4)).